Reading from the N-terminus, the 244-residue chain is Orotidine 5'-phosphate decarboxylase (244 aa).

Residues D20, K42, 70–79 (DLKFFDIPAT), T125, R186, Q195, G215, and R216 contribute to the substrate site. K72 serves as the catalytic Proton donor.

It belongs to the OMP decarboxylase family. Type 1 subfamily. Homodimer.

It carries out the reaction orotidine 5'-phosphate + H(+) = UMP + CO2. It participates in pyrimidine metabolism; UMP biosynthesis via de novo pathway; UMP from orotate: step 2/2. In terms of biological role, catalyzes the decarboxylation of orotidine 5'-monophosphate (OMP) to uridine 5'-monophosphate (UMP). This Xylella fastidiosa (strain M23) protein is Orotidine 5'-phosphate decarboxylase.